The chain runs to 176 residues: Avian agnoprotein 1a (176 aa).

Disordered regions lie at residues 1-85 (MSTP…GKLE) and 116-176 (VYAA…RPAR). A compositionally biased stretch (basic and acidic residues) spans 75 to 85 (YDRQNRFGKLE). The stretch at 76–119 (DRQNRFGKLESEIRETKSQLETLRQELKHLQADVDDLKETVYAA) forms a coiled coil. Low complexity predominate over residues 137–161 (TPTATTPEASPAAPTTESTETTGPS).

As to quaternary structure, interacts with VP1.

It is found in the virion. Its subcellular location is the host nucleus. The chain is Avian agnoprotein 1a from Budgerigar fledgling disease virus (BFPyV).